A 161-amino-acid chain; its full sequence is Allophycocyanin alpha chain (161 aa).

Position 71 is an N4-methylasparagine (Asn-71). Cys-81 provides a ligand contact to (2R,3E)-phycocyanobilin.

The protein belongs to the phycobiliprotein family. As to quaternary structure, heterodimer of an alpha and a beta chain. Contains one covalently linked phycocyanobilin chromophore.

Its subcellular location is the plastid. It is found in the cyanelle thylakoid membrane. Functionally, light-harvesting photosynthetic bile pigment-protein from the phycobiliprotein complex. Allophycocyanin has a maximum absorption at approximately 650 nanometers. This Cyanophora paradoxa protein is Allophycocyanin alpha chain (apcA).